A 394-amino-acid polypeptide reads, in one-letter code: Xylose isomerase (394 aa).

Residues His-54 and Asp-57 contribute to the active site. 7 residues coordinate Mg(2+): Glu-180, Glu-216, His-219, Asp-244, Asp-254, Asp-256, and Asp-285. The segment at 370-394 (VRTPRPAGDGPPAGRARLTVAPRKR) is disordered. Over residues 373–386 (PRPAGDGPPAGRAR) the composition is skewed to low complexity.

It belongs to the xylose isomerase family. In terms of assembly, homotetramer. It depends on Mg(2+) as a cofactor.

The protein resides in the cytoplasm. The catalysed reaction is alpha-D-xylose = alpha-D-xylulofuranose. In terms of biological role, involved in D-xylose catabolism. The protein is Xylose isomerase (xylA) of Streptomyces rochei (Streptomyces parvullus).